The chain runs to 555 residues: La-related protein 7 (555 aa).

In terms of domain architecture, HTH La-type RNA-binding spans 36-127 (RSRVKQLLSD…RRKEPLGETP (92 aa)). Residues 133–211 (RTVYVELLPK…PRKPGIFPKT (79 aa)) form the RRM domain. A disordered region spans residues 218 to 327 (PFDAVTQDND…ENKDEELNSL (110 aa)). Composition is skewed to polar residues over residues 238–251 (KNSTSEETGSNNMD), 258–274 (STVTSEPNLATLTSTVS), and 284–293 (SQSFEASSGE). A coiled-coil region spans residues 295-356 (QFEMSSKMRK…ERLKVGEEVI (62 aa)). A compositionally biased stretch (basic and acidic residues) spans 303–327 (RKVEEEKSELKDLSSENKDEELNSL). One can recognise a xRRM domain in the interval 425–538 (EFLSGVIVKI…TEKLISKAEK (114 aa)).

Belongs to the LARP7 family. As to quaternary structure, core component of the 7SK RNP complex. Associates with box C/D small nucleolar ribonucleoprotein (snoRNP) complexes.

Its subcellular location is the nucleus. It localises to the nucleoplasm. Its function is as follows. RNA-binding protein that specifically binds distinct small nuclear RNA (snRNAs) and regulates their processing and function. Specifically binds the 7SK snRNA (7SK RNA) and acts as a core component of the 7SK ribonucleoprotein (RNP) complex, thereby acting as a negative regulator of transcription elongation by RNA polymerase II. The 7SK RNP complex sequesters the positive transcription elongation factor b (P-TEFb) in a large inactive 7SK RNP complex preventing RNA polymerase II phosphorylation and subsequent transcriptional elongation. The 7SK RNP complex also promotes snRNA gene transcription by RNA polymerase II via interaction with the little elongation complex (LEC). LARP7 specifically binds to the highly conserved 3'-terminal U-rich stretch of 7SK RNA; on stimulation, remains associated with 7SK RNA, whereas P-TEFb is released from the complex. LARP7 also acts as a regulator of mRNA splicing fidelity by promoting U6 snRNA processing. Specifically binds U6 snRNAs and associates with a subset of box C/D RNP complexes: promotes U6 snRNA 2'-O-methylation by facilitating U6 snRNA loading into box C/D RNP complexes. U6 snRNA 2'-O-methylation is required for mRNA splicing fidelity. The chain is La-related protein 7 from Danio rerio (Zebrafish).